Reading from the N-terminus, the 526-residue chain is Bifunctional purine biosynthesis protein PurH (526 aa).

In terms of domain architecture, MGS-like spans 1–145 (MSKAPLALLS…KNHAHVGIVT (145 aa)).

It belongs to the PurH family.

The catalysed reaction is (6R)-10-formyltetrahydrofolate + 5-amino-1-(5-phospho-beta-D-ribosyl)imidazole-4-carboxamide = 5-formamido-1-(5-phospho-D-ribosyl)imidazole-4-carboxamide + (6S)-5,6,7,8-tetrahydrofolate. The enzyme catalyses IMP + H2O = 5-formamido-1-(5-phospho-D-ribosyl)imidazole-4-carboxamide. Its pathway is purine metabolism; IMP biosynthesis via de novo pathway; 5-formamido-1-(5-phospho-D-ribosyl)imidazole-4-carboxamide from 5-amino-1-(5-phospho-D-ribosyl)imidazole-4-carboxamide (10-formyl THF route): step 1/1. It participates in purine metabolism; IMP biosynthesis via de novo pathway; IMP from 5-formamido-1-(5-phospho-D-ribosyl)imidazole-4-carboxamide: step 1/1. In Psychrobacter arcticus (strain DSM 17307 / VKM B-2377 / 273-4), this protein is Bifunctional purine biosynthesis protein PurH.